A 173-amino-acid chain; its full sequence is Crossover junction endodeoxyribonuclease RuvC (173 aa).

Active-site residues include aspartate 8, glutamate 67, and aspartate 139. Residues aspartate 8, glutamate 67, and aspartate 139 each contribute to the Mg(2+) site.

Belongs to the RuvC family. Homodimer which binds Holliday junction (HJ) DNA. The HJ becomes 2-fold symmetrical on binding to RuvC with unstacked arms; it has a different conformation from HJ DNA in complex with RuvA. In the full resolvosome a probable DNA-RuvA(4)-RuvB(12)-RuvC(2) complex forms which resolves the HJ. The cofactor is Mg(2+).

The protein localises to the cytoplasm. It carries out the reaction Endonucleolytic cleavage at a junction such as a reciprocal single-stranded crossover between two homologous DNA duplexes (Holliday junction).. Its function is as follows. The RuvA-RuvB-RuvC complex processes Holliday junction (HJ) DNA during genetic recombination and DNA repair. Endonuclease that resolves HJ intermediates. Cleaves cruciform DNA by making single-stranded nicks across the HJ at symmetrical positions within the homologous arms, yielding a 5'-phosphate and a 3'-hydroxyl group; requires a central core of homology in the junction. The consensus cleavage sequence is 5'-(A/T)TT(C/G)-3'. Cleavage occurs on the 3'-side of the TT dinucleotide at the point of strand exchange. HJ branch migration catalyzed by RuvA-RuvB allows RuvC to scan DNA until it finds its consensus sequence, where it cleaves and resolves the cruciform DNA. The polypeptide is Crossover junction endodeoxyribonuclease RuvC (Psychromonas ingrahamii (strain DSM 17664 / CCUG 51855 / 37)).